The chain runs to 425 residues: Enolase (425 aa).

Q162 lines the (2R)-2-phosphoglycerate pocket. Catalysis depends on E204, which acts as the Proton donor. Positions 241, 282, and 309 each coordinate Mg(2+). The (2R)-2-phosphoglycerate site is built by K334, R363, S364, and K385. The Proton acceptor role is filled by K334.

This sequence belongs to the enolase family. It depends on Mg(2+) as a cofactor.

It is found in the cytoplasm. It localises to the secreted. Its subcellular location is the cell surface. The catalysed reaction is (2R)-2-phosphoglycerate = phosphoenolpyruvate + H2O. It functions in the pathway carbohydrate degradation; glycolysis; pyruvate from D-glyceraldehyde 3-phosphate: step 4/5. In terms of biological role, catalyzes the reversible conversion of 2-phosphoglycerate (2-PG) into phosphoenolpyruvate (PEP). It is essential for the degradation of carbohydrates via glycolysis. This Corynebacterium diphtheriae (strain ATCC 700971 / NCTC 13129 / Biotype gravis) protein is Enolase.